The sequence spans 76 residues: DNA-directed RNA polymerase subunit epsilon (76 aa).

Belongs to the RNA polymerase subunit epsilon family. RNAP is composed of a core of 2 alpha, a beta and a beta' subunit. The core is associated with a delta subunit, and at least one of epsilon or omega. When a sigma factor is associated with the core the holoenzyme is formed, which can initiate transcription.

The catalysed reaction is RNA(n) + a ribonucleoside 5'-triphosphate = RNA(n+1) + diphosphate. A non-essential component of RNA polymerase (RNAP). This is DNA-directed RNA polymerase subunit epsilon from Streptococcus equi subsp. equi (strain 4047).